Here is a 177-residue protein sequence, read N- to C-terminus: Large ribosomal subunit protein uL6 (177 aa).

Belongs to the universal ribosomal protein uL6 family. Part of the 50S ribosomal subunit.

Its function is as follows. This protein binds to the 23S rRNA, and is important in its secondary structure. It is located near the subunit interface in the base of the L7/L12 stalk, and near the tRNA binding site of the peptidyltransferase center. The protein is Large ribosomal subunit protein uL6 of Pseudomonas entomophila (strain L48).